The primary structure comprises 465 residues: UDP-N-acetylmuramate--L-alanine ligase (465 aa).

G112–T118 serves as a coordination point for ATP.

The protein belongs to the MurCDEF family.

Its subcellular location is the cytoplasm. It carries out the reaction UDP-N-acetyl-alpha-D-muramate + L-alanine + ATP = UDP-N-acetyl-alpha-D-muramoyl-L-alanine + ADP + phosphate + H(+). It functions in the pathway cell wall biogenesis; peptidoglycan biosynthesis. Its function is as follows. Cell wall formation. The protein is UDP-N-acetylmuramate--L-alanine ligase of Burkholderia cenocepacia (strain HI2424).